Consider the following 350-residue polypeptide: DNA polymerase IV (350 aa).

The UmuC domain maps to 7–188 (IIHIDMDYFF…LPVKKLFGVG (182 aa)). Aspartate 11 and aspartate 106 together coordinate Mg(2+). Glutamate 107 is a catalytic residue.

It belongs to the DNA polymerase type-Y family. Monomer. Mg(2+) is required as a cofactor.

It is found in the cytoplasm. It catalyses the reaction DNA(n) + a 2'-deoxyribonucleoside 5'-triphosphate = DNA(n+1) + diphosphate. Functionally, poorly processive, error-prone DNA polymerase involved in untargeted mutagenesis. Copies undamaged DNA at stalled replication forks, which arise in vivo from mismatched or misaligned primer ends. These misaligned primers can be extended by PolIV. Exhibits no 3'-5' exonuclease (proofreading) activity. May be involved in translesional synthesis, in conjunction with the beta clamp from PolIII. This is DNA polymerase IV from Francisella philomiragia subsp. philomiragia (strain ATCC 25017 / CCUG 19701 / FSC 153 / O#319-036).